We begin with the raw amino-acid sequence, 550 residues long: Neuronal acetylcholine receptor subunit alpha-9-II (550 aa).

The N-terminal stretch at Met-1–Ser-20 is a signal peptide. Over Ala-21–Ser-233 the chain is Extracellular. N-linked (GlcNAc...) asparagine glycosylation occurs at Asn-52. Residues Cys-150 and Cys-164 are joined by a disulfide bond. Asn-165 is a glycosylation site (N-linked (GlcNAc...) asparagine). A disulfide bridge connects residues Cys-214 and Cys-215. 3 helical membrane passes run Phe-234–Phe-254, Val-264–Ser-284, and Tyr-298–Ile-318. At His-319 to Arg-528 the chain is on the cytoplasmic side. The interval Thr-357 to Phe-439 is disordered. Residues Ser-358–Ser-367 are compositionally biased toward low complexity. The segment covering Arg-413–His-422 has biased composition (basic residues). The helical transmembrane segment at Phe-529–Ala-549 threads the bilayer.

This sequence belongs to the ligand-gated ion channel (TC 1.A.9) family. Acetylcholine receptor (TC 1.A.9.1) subfamily. As to expression, expressed in the brain, liver, olfactory mucosa, pituitary gland and hair cells of the saccule.

It localises to the postsynaptic cell membrane. It is found in the cell membrane. The protein is Neuronal acetylcholine receptor subunit alpha-9-II of Oncorhynchus mykiss (Rainbow trout).